We begin with the raw amino-acid sequence, 121 residues long: Large ribosomal subunit protein uL24 (121 aa).

It belongs to the universal ribosomal protein uL24 family. As to quaternary structure, part of the 50S ribosomal subunit.

In terms of biological role, one of two assembly initiator proteins, it binds directly to the 5'-end of the 23S rRNA, where it nucleates assembly of the 50S subunit. Its function is as follows. Located at the polypeptide exit tunnel on the outside of the subunit. This chain is Large ribosomal subunit protein uL24, found in Pyrococcus furiosus (strain ATCC 43587 / DSM 3638 / JCM 8422 / Vc1).